Here is a 220-residue protein sequence, read N- to C-terminus: UPF0319 protein Asuc_1002 (220 aa).

An N-terminal signal peptide occupies residues 1–21 (MKFRLAAVAAAALLASSASFA).

The protein belongs to the UPF0319 family.

This is UPF0319 protein Asuc_1002 from Actinobacillus succinogenes (strain ATCC 55618 / DSM 22257 / CCUG 43843 / 130Z).